The primary structure comprises 546 residues: CTP synthase (546 aa).

The tract at residues 1-267 (MSKFVFVTGG…AQQTLELLNL (267 aa)) is amidoligase domain. Ser-13 provides a ligand contact to CTP. Ser-13 serves as a coordination point for UTP. Residues 14–19 (SIGKGI) and Asp-71 contribute to the ATP site. Asp-71 and Glu-141 together coordinate Mg(2+). Residues 148 to 150 (DIE), 188 to 193 (KTKPTQ), and Lys-224 contribute to the CTP site. Residues 188–193 (KTKPTQ) and Lys-224 contribute to the UTP site. One can recognise a Glutamine amidotransferase type-1 domain in the interval 292–534 (EIAIVGKYVQ…MKAALKGREE (243 aa)). Residue Gly-354 coordinates L-glutamine. Catalysis depends on Cys-381, which acts as the Nucleophile; for glutamine hydrolysis. L-glutamine-binding positions include 382 to 385 (LGMQ), Glu-405, and Arg-462. Catalysis depends on residues His-507 and Glu-509.

This sequence belongs to the CTP synthase family. Homotetramer.

It carries out the reaction UTP + L-glutamine + ATP + H2O = CTP + L-glutamate + ADP + phosphate + 2 H(+). It catalyses the reaction L-glutamine + H2O = L-glutamate + NH4(+). The catalysed reaction is UTP + NH4(+) + ATP = CTP + ADP + phosphate + 2 H(+). It functions in the pathway pyrimidine metabolism; CTP biosynthesis via de novo pathway; CTP from UDP: step 2/2. Allosterically activated by GTP, when glutamine is the substrate; GTP has no effect on the reaction when ammonia is the substrate. The allosteric effector GTP functions by stabilizing the protein conformation that binds the tetrahedral intermediate(s) formed during glutamine hydrolysis. Inhibited by the product CTP, via allosteric rather than competitive inhibition. Functionally, catalyzes the ATP-dependent amination of UTP to CTP with either L-glutamine or ammonia as the source of nitrogen. Regulates intracellular CTP levels through interactions with the four ribonucleotide triphosphates. The polypeptide is CTP synthase (Microcystis aeruginosa (strain NIES-843 / IAM M-2473)).